The sequence spans 178 residues: CASP-like protein 2A2 (178 aa).

Topologically, residues 1–22 (MDKTDQTAIDGSALELNRTEKT) are cytoplasmic. A helical transmembrane segment spans residues 23-43 (VEAVLRVASMALSITGLVIMI). The Extracellular segment spans residues 44–69 (KNSISNDFGSLSYSNLGAFMYLVGAN). A helical transmembrane segment spans residues 70–90 (GVCAAYSLLSALAILALPCPI). Topologically, residues 91 to 96 (SKVQVR) are cytoplasmic. The chain crosses the membrane as a helical span at residues 97–117 (TLFLLDQVVTYVVLAAGAVSA). Topologically, residues 118-145 (ETVYLAYYGNIPITWSSACDSYGIFCHK) are extracellular. Residues 146-166 (ALISVVFTFVVSLLYMLLSLI) traverse the membrane as a helical segment. Over 167–178 (SSYRLFSRFEAP) the chain is Cytoplasmic.

The protein belongs to the Casparian strip membrane proteins (CASP) family. In terms of assembly, homodimer and heterodimers.

The protein localises to the cell membrane. This is CASP-like protein 2A2 from Arabidopsis lyrata subsp. lyrata (Lyre-leaved rock-cress).